We begin with the raw amino-acid sequence, 354 residues long: Guanine nucleotide-binding protein G(t) subunit alpha-2 (354 aa).

The segment at 1-27 is disordered; sequence MGSGASAEDKELAKRSKELEKKLQEDA. G2 is lipidated: N-myristoyl glycine. Residues 7–27 show a composition bias toward basic and acidic residues; the sequence is AEDKELAKRSKELEKKLQEDA. The 323-residue stretch at 32–354 folds into the G-alpha domain; sequence KTVKLLLLGA…KENLKDCGLF (323 aa). The interval 35–48 is G1 motif; that stretch reads KLLLLGAGESGKST. Residues 40–47, 175–181, 200–204, 269–272, and A326 contribute to the GTP site; these read GAGESGKS, LRSRVKT, DVGGQ, and NKKD. Mg(2+) is bound by residues S47 and T181. The interval 173–181 is G2 motif; sequence DVLRSRVKT. The interval 196–205 is G3 motif; it reads FRMFDVGGQR. Residues 265-272 form a G4 motif region; the sequence is VLFLNKKD. Residues 324–329 form a G5 motif region; sequence TCATDT.

This sequence belongs to the G-alpha family. G(i/o/t/z) subfamily. As to quaternary structure, g proteins are composed of 3 units; alpha, beta and gamma. The alpha chain contains the guanine nucleotide binding site. In terms of tissue distribution, retinal rod outer segment.

The protein localises to the cell projection. Its subcellular location is the cilium. It localises to the photoreceptor outer segment. It is found in the photoreceptor inner segment. In terms of biological role, guanine nucleotide-binding proteins (G proteins) are involved as modulators or transducers in various transmembrane signaling systems. Transducin is an amplifier and one of the transducers of a visual impulse that performs the coupling between rhodopsin and cGMP-phosphodiesterase. This chain is Guanine nucleotide-binding protein G(t) subunit alpha-2 (GNAT2), found in Bos taurus (Bovine).